The primary structure comprises 157 residues: SsrA-binding protein (157 aa).

Residues leucine 128–glycine 157 are disordered. The span at lysine 137–glycine 157 shows a compositional bias: basic and acidic residues.

It belongs to the SmpB family.

Its subcellular location is the cytoplasm. Required for rescue of stalled ribosomes mediated by trans-translation. Binds to transfer-messenger RNA (tmRNA), required for stable association of tmRNA with ribosomes. tmRNA and SmpB together mimic tRNA shape, replacing the anticodon stem-loop with SmpB. tmRNA is encoded by the ssrA gene; the 2 termini fold to resemble tRNA(Ala) and it encodes a 'tag peptide', a short internal open reading frame. During trans-translation Ala-aminoacylated tmRNA acts like a tRNA, entering the A-site of stalled ribosomes, displacing the stalled mRNA. The ribosome then switches to translate the ORF on the tmRNA; the nascent peptide is terminated with the 'tag peptide' encoded by the tmRNA and targeted for degradation. The ribosome is freed to recommence translation, which seems to be the essential function of trans-translation. The chain is SsrA-binding protein from Methylococcus capsulatus (strain ATCC 33009 / NCIMB 11132 / Bath).